The primary structure comprises 175 residues: Large ribosomal subunit protein uL6 (175 aa).

It belongs to the universal ribosomal protein uL6 family. In terms of assembly, part of the 50S ribosomal subunit.

In terms of biological role, this protein binds to the 23S rRNA, and is important in its secondary structure. It is located near the subunit interface in the base of the L7/L12 stalk, and near the tRNA binding site of the peptidyltransferase center. The chain is Large ribosomal subunit protein uL6 from Xanthomonas axonopodis pv. citri (strain 306).